A 527-amino-acid polypeptide reads, in one-letter code: Tetanolysin (527 aa).

The signal sequence occupies residues 1–32; it reads MNKNVLKFVSRSLLIFSMTGLISNYNSSNVLA. 4 beta stranded membrane-spanning segments follow: residues 215-228, 235-244, 313-322, and 330-342; these read QSQL…NFKA, IDFDSIFKGE, SSHVKAAFKA, and SSNA…LNQS. The short motif at 484–494 is the Conserved undecapeptide element; sequence ECTGLAWEWWR. Positions 516–517 match the Cholesterol binding motif; that stretch reads TL.

It belongs to the cholesterol-dependent cytolysin family. In terms of assembly, homooligomeric pore complex containing 35-50 subunits; when inserted in the host membrane. In terms of processing, purified 48 and 53 kDa proteins with 4 different pIs (6.1, 5.6, 5.3 and 6.6) in decreasing order of activity.

The protein resides in the secreted. Its subcellular location is the host cell membrane. Cytolysis of host cells is inhibited by cholesterol. A cholesterol-dependent toxin that causes cytolysis by forming pores in cholesterol-containing host membranes. After binding to target membranes, the protein undergoes a major conformation change, leading to its insertion in the host membrane and formation of an oligomeric pore complex. Cholesterol is required for binding to host membranes, membrane insertion and pore formation; cholesterol binding is mediated by a Thr-Leu pair in the C-terminus. This chain is Tetanolysin, found in Clostridium tetani (strain Massachusetts / E88).